A 790-amino-acid polypeptide reads, in one-letter code: Protein SEY1 (790 aa).

Residues 1 to 692 (MELSEGELSH…KRSIVQHITQ (692 aa)) lie on the Cytoplasmic side of the membrane. Residues 55 to 284 (GNNYHIISVF…VNNELFKPEY (230 aa)) form the GB1/RHD3-type G domain. Position 65 to 72 (65 to 72 (GSQSTGKS)) interacts with GTP. The helical transmembrane segment at 693–713 (IPYYIYLIILVLGWNEFMAII) threads the bilayer. Residues 714–716 (RNP) are Lumenal-facing. The chain crosses the membrane as a helical span at residues 717–737 (LFFSLSIVLGATVYVLYYLNL). Residues 738 to 790 (LKPAMLVAQRTMDEVIIMAKTKLREVLIDDHEVTGRQLNKIAGGKENIELDDM) lie on the Cytoplasmic side of the membrane.

Belongs to the TRAFAC class dynamin-like GTPase superfamily. GB1/RHD3 GTPase family. RHD3 subfamily.

The protein resides in the endoplasmic reticulum membrane. In terms of biological role, cooperates with the reticulon proteins and tubule-shaping DP1 family proteins to generate and maintain the structure of the tubular endoplasmic reticulum network. Has GTPase activity, which is required for its function in ER organization. This chain is Protein SEY1, found in Candida dubliniensis (strain CD36 / ATCC MYA-646 / CBS 7987 / NCPF 3949 / NRRL Y-17841) (Yeast).